The chain runs to 539 residues: Tripartite motif-containing protein 26 (539 aa).

An RING-type zinc finger spans residues 16–57 (CSICLDYLRDPVTIDCGHVFCRSCTTDVRPISGSRPVCPLCK). The B box-type zinc finger occupies 97–138 (QDAKLCERHREKLHYYCEDDGKLLCVMCRESREHRPHTAVLM). Zn(2+) contacts are provided by cysteine 102, histidine 105, cysteine 124, and histidine 130. A coiled-coil region spans residues 188 to 227 (IVAEFEQGHQFLREREEHLLEQLAKLEQELTEGREKFKSR). The 245-residue stretch at 295-539 (RGLREFQGKL…WPGTRLLLRP (245 aa)) folds into the B30.2/SPRY domain. The tract at residues 376 to 437 (REGWSEDEEE…EEEEEVLESC (62 aa)) is disordered. Residues 380–434 (SEDEEEGDEEEEGEEEEEEEEAGYGDGYDDWETDEDEESLGDEEEEEEEEEEEVL) show a composition bias toward acidic residues.

It belongs to the TRIM/RBCC family. As to quaternary structure, interacts with TBK1; this interaction bridges together TBK1 and NEMO in order to activate TBK1. Interacts with INCA1. Autoubiquitinates upon viral infection. In turn, autoubiquitinated TRIM26 recruits NEMO and bridges TBK1-NEMO interaction.

It localises to the cytoplasm. It is found in the nucleus. The enzyme catalyses S-ubiquitinyl-[E2 ubiquitin-conjugating enzyme]-L-cysteine + [acceptor protein]-L-lysine = [E2 ubiquitin-conjugating enzyme]-L-cysteine + N(6)-ubiquitinyl-[acceptor protein]-L-lysine.. In terms of biological role, E3 ubiquitin-protein ligase which regulates the IFN-beta production and antiviral response downstream of various DNA-encoded pattern-recognition receptors (PRRs). Also plays a central role in determining the response to different forms of oxidative stress by controlling levels of DNA glycosylases NEIL1, NEIL3 and NTH1 that are involved in repair of damaged DNA. Promotes nuclear IRF3 ubiquitination and proteasomal degradation. Bridges together TBK1 and NEMO during the innate response to viral infection leading to the activation of TBK1. Positively regulates LPS-mediated inflammatory innate immune response by catalyzing the 'Lys-11'-linked polyubiquitination of TAB1 to enhance its activation and subsequent NF-kappa-B and MAPK signaling. In a manner independent of its catalytic activity, inhibits WWP2, a SOX2-directed E3 ubiquitin ligase, and thus protects SOX2 from polyubiquitination and proteasomal degradation. Ubiquitinates the histone acetyltransferase protein complex component PHF20 and thereby triggers its degradation in the nucleus after its recruitment by the histone demethylase KDM6B, serving as a scaffold protein. Upon induction by TGF-beta, ubiquitinates the TFIID component TAF7 for proteasomal degradation. Induces ferroptosis by ubiquitinating SLC7A11, a critical protein for lipid reactive oxygen species (ROS) scavenging. Inhibits directly hepatitis B virus replication by mediating HBX ubiquitination and subsequent degradation. Functionally, (Microbial infection) Promotes herpes simplex virus type 2/HHV-2 infection in vaginal epithelial cells by decreasing the nuclear localization of IRF3, the primary mediator of type I interferon activation. The polypeptide is Tripartite motif-containing protein 26 (TRIM26) (Homo sapiens (Human)).